The following is a 434-amino-acid chain: [Arg8]-vasotocin receptor (434 aa).

Topologically, residues 1–27 (MGRIANQTTASNDTDPFGRNEEVAKME) are extracellular. N-linked (GlcNAc...) asparagine glycosylation is found at asparagine 6 and asparagine 12. The chain crosses the membrane as a helical span at residues 28–48 (ITVLSVTFFVAVIGNLSVLLA). At 49–67 (MHNTKKKSSRMHLFIKHLS) the chain is on the cytoplasmic side. Residues 68-88 (LADMVVAFFQVLPQLCWEITF) form a helical membrane-spanning segment. The Extracellular segment spans residues 89 to 98 (RFYGPDFLCR). The cysteines at positions 97 and 176 are disulfide-linked. Residues 99-119 (IVKHLQVLGMFASTYMMVMMT) traverse the membrane as a helical segment. Topologically, residues 120–141 (LDRYIAICHPLKTLQQPTQRAY) are cytoplasmic. A helical membrane pass occupies residues 142-162 (IMIGSTWLCSLLLSTPQYFIF). Residues 163–191 (SLSEIQNGSYVYDCWGHFIEPWGIRAYIT) are Extracellular-facing. The chain crosses the membrane as a helical span at residues 192 to 212 (WITVGIFLIPVIILMICYGFI). Over 213-257 (CHSIWKNIKCKTMRGTRNTKDGMIGKVSVSSVTIISRAKLRTVKM) the chain is Cytoplasmic. The chain crosses the membrane as a helical span at residues 258–278 (TLVIVLAYIVCWAPFFIVQMW). At 279–295 (SVWDENFSWDDSENAAV) the chain is on the extracellular side. The helical transmembrane segment at 296–316 (TLSALLASLNSCCNPWIYMLF) threads the bilayer. At 317–434 (SGHLLYDFLR…KSSQCMSKES (118 aa)) the chain is on the cytoplasmic side.

This sequence belongs to the G-protein coupled receptor 1 family. Vasopressin/oxytocin receptor subfamily. In terms of tissue distribution, expressed in pituitary, liver, gills, swim bladder and lateral line.

Its subcellular location is the cell membrane. In terms of biological role, binds to vasotocin. Produces an induction of membrane chloride currents indicating that it is coupled to the inositol phosphate/calcium pathway. In Catostomus commersonii (White sucker), this protein is [Arg8]-vasotocin receptor.